The chain runs to 164 residues: Protein phosphatase 1 regulatory subunit 14C (164 aa).

The span at 1-19 (MSVVTGGGEAAGGTSGGGA) shows a compositional bias: gly residues. The interval 1–72 (MSVVTGGGEA…QRRHQQGKVT (72 aa)) is disordered. Residue Ser-2 is modified to N-acetylserine. Ser-25 carries the post-translational modification Phosphoserine. At Arg-27 the chain carries Omega-N-methylarginine. The residue at position 33 (Ser-33) is a Phosphoserine. The span at 50–62 (VATVAAAGQVQQQ) shows a compositional bias: low complexity. A Phosphothreonine; by ILK1 modification is found at Thr-72.

It belongs to the PP1 inhibitor family. In terms of processing, has over 600-fold higher inhibitory activity when phosphorylated, creating a molecular switch for regulating the phosphorylation status of PPP1CA substrates and smooth muscle contraction. The main inhibitory site appears to be Thr-72.

The protein resides in the endomembrane system. Functionally, inhibitor of the PP1 regulatory subunit PPP1CA. The polypeptide is Protein phosphatase 1 regulatory subunit 14C (Ppp1r14c) (Rattus norvegicus (Rat)).